The following is a 328-amino-acid chain: MSLRFALTPGEPAGIGPDLCLLLARSAQPHPLIAIASRTLLQERAGQLGLAIDLKDVSPAAWPERPAKAGQLYVWDTPLAAPVRPGQLDRANAAYVLETLTRAGQGCLDGHFAGMITAPVHKGVINEAGIPFSGHTEFLADLTHTAQVVMMLATRGLRVALATTHLPLREVADAISDERLTRVARILHADLRDKFGIAHPRILVCGLNPHAGEGGHLGREEIEVIEPCLERLRGEGLDLIGPLPADTLFTPKHLEHCDAVLAMYHDQGLPVLKYKGFGAAVNVTLGLPIIRTSVDHGTALDLAGSGRIDSGSLQVALETAYQMAASRC.

Substrate is bound by residues His135 and Thr136. A divalent metal cation-binding residues include His165, His210, and His265. Lys273, Asn282, and Arg291 together coordinate substrate.

The protein belongs to the PdxA family. As to quaternary structure, homodimer. It depends on Zn(2+) as a cofactor. Mg(2+) serves as cofactor. Requires Co(2+) as cofactor.

It is found in the cytoplasm. It catalyses the reaction 4-(phosphooxy)-L-threonine + NAD(+) = 3-amino-2-oxopropyl phosphate + CO2 + NADH. It participates in cofactor biosynthesis; pyridoxine 5'-phosphate biosynthesis; pyridoxine 5'-phosphate from D-erythrose 4-phosphate: step 4/5. Its function is as follows. Catalyzes the NAD(P)-dependent oxidation of 4-(phosphooxy)-L-threonine (HTP) into 2-amino-3-oxo-4-(phosphooxy)butyric acid which spontaneously decarboxylates to form 3-amino-2-oxopropyl phosphate (AHAP). The polypeptide is 4-hydroxythreonine-4-phosphate dehydrogenase (Pseudomonas aeruginosa (strain ATCC 15692 / DSM 22644 / CIP 104116 / JCM 14847 / LMG 12228 / 1C / PRS 101 / PAO1)).